A 657-amino-acid polypeptide reads, in one-letter code: Endoplasmic reticulum chaperone BiP homolog (657 aa).

Residues 1-17 (MKVFSLILIAFVANAYC) form the signal peptide. ATP contacts are provided by residues 38–41 (GTTY), lysine 99, 229–231 (GGT), 295–302 (EKAKRALS), and 366–369 (GSTR). A nucleotide-binding (NBD) region spans residues 128–282 (KPNVEVKVGS…KKKSGKDLRK (155 aa)). Residues 402 to 502 (VQAGVIGGVE…PRGVPQIEVT (101 aa)) form a substrate-binding (SBD) region. The segment at 607 to 657 (LGSNQDASTEENKEQKKELESVVQPIVSKLYSAGGQGEQASEEPSEDHDEL) is disordered. The span at 616 to 626 (EENKEQKKELE) shows a compositional bias: basic and acidic residues. The segment covering 646–657 (ASEEPSEDHDEL) has biased composition (acidic residues). Residues 654-657 (HDEL) carry the Prevents secretion from ER motif.

Belongs to the heat shock protein 70 family.

The protein localises to the endoplasmic reticulum lumen. The enzyme catalyses ATP + H2O = ADP + phosphate + H(+). Its activity is regulated as follows. The chaperone activity is regulated by ATP-induced allosteric coupling of the nucleotide-binding (NBD) and substrate-binding (SBD) domains. In the ADP-bound and nucleotide-free (apo) states, the two domains have little interaction. In contrast, in the ATP-bound state the two domains are tightly coupled, which results in drastically accelerated kinetics in both binding and release of polypeptide substrates. J domain-containing co-chaperones stimulate the ATPase activity and are required for efficient substrate recognition. Endoplasmic reticulum chaperone that plays a key role in protein folding and quality control in the endoplasmic reticulum lumen. Required for ER dynamics during the first embryonic cell divisions. Specifically, controls ER transition into sheet-like structures at the onset of mitosis, possibly by regulating homotypic membrane fusion. This Caenorhabditis elegans protein is Endoplasmic reticulum chaperone BiP homolog (hsp-4).